Reading from the N-terminus, the 86-residue chain is Putative regulatory protein OB1501 (86 aa).

It belongs to the RemA family.

The sequence is that of Putative regulatory protein OB1501 from Oceanobacillus iheyensis (strain DSM 14371 / CIP 107618 / JCM 11309 / KCTC 3954 / HTE831).